We begin with the raw amino-acid sequence, 174 residues long: Gamma-crystallin S (174 aa).

2 consecutive Beta/gamma crystallin 'Greek key' domains span residues 2 to 40 and 41 to 83; these read GRII…RVES and GAWV…KMIH. The interval 84–89 is connecting peptide; it reads FVSGSE. 2 consecutive Beta/gamma crystallin 'Greek key' domains span residues 90–130 and 131–173; these read YKIQ…KVLD and GIWI…KRLM.

The protein belongs to the beta/gamma-crystallin family.

In terms of biological role, crystallins are the dominant structural components of the vertebrate eye lens. The protein is Gamma-crystallin S (crygs) of Cyprinus carpio (Common carp).